The sequence spans 189 residues: Peptidyl-tRNA hydrolase (189 aa).

Tyr-18 provides a ligand contact to tRNA. His-23 (proton acceptor) is an active-site residue. TRNA is bound by residues Phe-67, Asn-69, and Asn-115.

The protein belongs to the PTH family. In terms of assembly, monomer.

It is found in the cytoplasm. The enzyme catalyses an N-acyl-L-alpha-aminoacyl-tRNA + H2O = an N-acyl-L-amino acid + a tRNA + H(+). Its function is as follows. Hydrolyzes ribosome-free peptidyl-tRNAs (with 1 or more amino acids incorporated), which drop off the ribosome during protein synthesis, or as a result of ribosome stalling. Catalyzes the release of premature peptidyl moieties from peptidyl-tRNA molecules trapped in stalled 50S ribosomal subunits, and thus maintains levels of free tRNAs and 50S ribosomes. This Leptospira borgpetersenii serovar Hardjo-bovis (strain JB197) protein is Peptidyl-tRNA hydrolase.